A 431-amino-acid chain; its full sequence is 3-phosphoshikimate 1-carboxyvinyltransferase (431 aa).

3-phosphoshikimate is bound by residues Lys20, Ser21, and Arg25. Lys20 contacts phosphoenolpyruvate. Gly91 and Arg119 together coordinate phosphoenolpyruvate. 3-phosphoshikimate is bound by residues Ser164, Gln166, Asp317, and Lys344. Residue Gln166 coordinates phosphoenolpyruvate. The active-site Proton acceptor is Asp317. Phosphoenolpyruvate-binding residues include Arg348 and Arg390.

This sequence belongs to the EPSP synthase family. Monomer.

The protein localises to the cytoplasm. It carries out the reaction 3-phosphoshikimate + phosphoenolpyruvate = 5-O-(1-carboxyvinyl)-3-phosphoshikimate + phosphate. Its pathway is metabolic intermediate biosynthesis; chorismate biosynthesis; chorismate from D-erythrose 4-phosphate and phosphoenolpyruvate: step 6/7. Its function is as follows. Catalyzes the transfer of the enolpyruvyl moiety of phosphoenolpyruvate (PEP) to the 5-hydroxyl of shikimate-3-phosphate (S3P) to produce enolpyruvyl shikimate-3-phosphate and inorganic phosphate. This is 3-phosphoshikimate 1-carboxyvinyltransferase from Aquifex aeolicus (strain VF5).